Consider the following 229-residue polypeptide: Glucose-induced degradation protein 8-B homolog (229 aa).

The LisH domain occupies 26–58 (QRADMNRLIMNYLVTEGFKEAAEKFRMESGIEP). The 58-residue stretch at 64–121 (SLDERIKIREMVLKGQIQEAIALINSLHPELLDTNRYLYFHLQQQHLIELIRLRETEA) folds into the CTLH domain.

Identified in the CTLH complex that contains at least MAEA, RMND5A (or alternatively its paralog RMND5B), GID8, WDR26, and RANBP9 and/or RANBP10. Interacts with CTNNB1.

The protein resides in the cytoplasm. Its subcellular location is the nucleus. In terms of biological role, core component of the CTLH E3 ubiquitin-protein ligase complex that selectively accepts ubiquitin from UBE2H and mediates ubiquitination and subsequent proteasomal degradation of target proteins. Acts as a positive regulator of Wnt signaling pathway by promoting beta-catenin (CTNNB1) nuclear accumulation. Required for normal Wnt signaling and normal dorsoventral patterning during embryogenesis. In Danio rerio (Zebrafish), this protein is Glucose-induced degradation protein 8-B homolog (gid8b).